A 201-amino-acid polypeptide reads, in one-letter code: 8-oxoguanine DNA glycosylase/AP lyase (201 aa).

Active-site residues include lysine 126 and aspartate 144.

The protein belongs to the type-2 OGG1 family.

It catalyses the reaction 2'-deoxyribonucleotide-(2'-deoxyribose 5'-phosphate)-2'-deoxyribonucleotide-DNA = a 3'-end 2'-deoxyribonucleotide-(2,3-dehydro-2,3-deoxyribose 5'-phosphate)-DNA + a 5'-end 5'-phospho-2'-deoxyribonucleoside-DNA + H(+). In terms of biological role, catalyzes the excision of an oxidatively damaged form of guanine (7,8-dihydro-8-oxoguanine = 8-oxoG) from DNA. Also cleaves the DNA backbone at apurinic/apyrimidinic sites (AP sites). In Metallosphaera sedula (strain ATCC 51363 / DSM 5348 / JCM 9185 / NBRC 15509 / TH2), this protein is 8-oxoguanine DNA glycosylase/AP lyase.